The primary structure comprises 358 residues: uncharacterized protein (358 aa).

Residues 1–47 (MGNVAGETRANVIPLHTNRSRVAARRRAGQRAESRQHPSLLSDPNDR) form a disordered region. Over residues 18-29 (NRSRVAARRRAG) the composition is skewed to basic residues.

It to M.leprae ML2427.

This is an uncharacterized protein from Mycobacterium tuberculosis (strain CDC 1551 / Oshkosh).